The primary structure comprises 377 residues: Chaperone protein DnaJ (377 aa).

One can recognise a J domain in the interval 5–70 (DYYEILGVSR…QKRAAYDQYG (66 aa)). The CR-type zinc finger occupies 132 to 210 (GVTKEIRIPT…CHGHGRIEKS (79 aa)). Residues C145, C148, C162, C165, C184, C187, C198, and C201 each coordinate Zn(2+). CXXCXGXG motif repeat units follow at residues 145–152 (CDVCHGSG), 162–169 (CPTCHGAG), 184–191 (CPHCHGRG), and 198–205 (CNKCHGHG).

Belongs to the DnaJ family. Homodimer. It depends on Zn(2+) as a cofactor.

It is found in the cytoplasm. In terms of biological role, participates actively in the response to hyperosmotic and heat shock by preventing the aggregation of stress-denatured proteins and by disaggregating proteins, also in an autonomous, DnaK-independent fashion. Unfolded proteins bind initially to DnaJ; upon interaction with the DnaJ-bound protein, DnaK hydrolyzes its bound ATP, resulting in the formation of a stable complex. GrpE releases ADP from DnaK; ATP binding to DnaK triggers the release of the substrate protein, thus completing the reaction cycle. Several rounds of ATP-dependent interactions between DnaJ, DnaK and GrpE are required for fully efficient folding. Also involved, together with DnaK and GrpE, in the DNA replication of plasmids through activation of initiation proteins. This chain is Chaperone protein DnaJ, found in Edwardsiella ictaluri (strain 93-146).